Reading from the N-terminus, the 379-residue chain is DNA replication and repair protein RecF (379 aa).

G30–T37 lines the ATP pocket.

This sequence belongs to the RecF family.

The protein localises to the cytoplasm. Functionally, the RecF protein is involved in DNA metabolism; it is required for DNA replication and normal SOS inducibility. RecF binds preferentially to single-stranded, linear DNA. It also seems to bind ATP. The polypeptide is DNA replication and repair protein RecF (Ligilactobacillus salivarius (strain UCC118) (Lactobacillus salivarius)).